Here is a 191-residue protein sequence, read N- to C-terminus: Putative glutathione-dependent formaldehyde-activating enzyme (191 aa).

One can recognise a CENP-V/GFA domain in the interval 20–166; it reads FSGGTLRCHC…FKSVGLETYD (147 aa). 7 residues coordinate Zn(2+): Cys27, Cys29, Cys48, Cys50, Cys53, Cys95, and Cys98.

Belongs to the Gfa family. Zn(2+) serves as cofactor.

The catalysed reaction is S-(hydroxymethyl)glutathione = glutathione + formaldehyde. It functions in the pathway one-carbon metabolism; formaldehyde degradation; formate from formaldehyde (glutathione route): step 1/3. Functionally, catalyzes the condensation of formaldehyde and glutathione to S-hydroxymethylglutathione. The sequence is that of Putative glutathione-dependent formaldehyde-activating enzyme from Colletotrichum graminicola (strain M1.001 / M2 / FGSC 10212) (Maize anthracnose fungus).